A 420-amino-acid polypeptide reads, in one-letter code: Glutamate dehydrogenase (420 aa).

The active site involves lysine 105. Residue 220-226 (GYGNAGY) participates in NAD(+) binding.

It belongs to the Glu/Leu/Phe/Val dehydrogenases family. As to quaternary structure, homohexamer.

The protein localises to the cytoplasm. The catalysed reaction is L-glutamate + NAD(+) + H2O = 2-oxoglutarate + NH4(+) + NADH + H(+). It catalyses the reaction L-glutamate + NADP(+) + H2O = 2-oxoglutarate + NH4(+) + NADPH + H(+). This is Glutamate dehydrogenase (gdhA) from Pyrococcus horikoshii (strain ATCC 700860 / DSM 12428 / JCM 9974 / NBRC 100139 / OT-3).